The chain runs to 228 residues: 2,3-bisphosphoglycerate-dependent phosphoglycerate mutase (228 aa).

Substrate contacts are provided by residues Arg8–Asn15, Thr21–Gly22, Arg60, Glu87–Tyr90, Lys98, Arg114–Arg115, and Gly183–Asn184. The active-site Tele-phosphohistidine intermediate is the His9. The active-site Proton donor/acceptor is Glu87.

Belongs to the phosphoglycerate mutase family. BPG-dependent PGAM subfamily.

It carries out the reaction (2R)-2-phosphoglycerate = (2R)-3-phosphoglycerate. The protein operates within carbohydrate degradation; glycolysis; pyruvate from D-glyceraldehyde 3-phosphate: step 3/5. In terms of biological role, catalyzes the interconversion of 2-phosphoglycerate and 3-phosphoglycerate. The sequence is that of 2,3-bisphosphoglycerate-dependent phosphoglycerate mutase from Staphylococcus epidermidis (strain ATCC 12228 / FDA PCI 1200).